Reading from the N-terminus, the 68-residue chain is Sec-independent protein translocase protein TatA (68 aa).

Residues 1–21 (MGSFSIWHWLIVLAVVLLLFG) traverse the membrane as a helical segment. Residues 48–68 (AAAADKSIDGKTVDHKSDEVR) are disordered. Positions 53–68 (KSIDGKTVDHKSDEVR) are enriched in basic and acidic residues.

Belongs to the TatA/E family. In terms of assembly, the Tat system comprises two distinct complexes: a TatABC complex, containing multiple copies of TatA, TatB and TatC subunits, and a separate TatA complex, containing only TatA subunits. Substrates initially bind to the TatABC complex, which probably triggers association of the separate TatA complex to form the active translocon.

The protein localises to the cell inner membrane. Part of the twin-arginine translocation (Tat) system that transports large folded proteins containing a characteristic twin-arginine motif in their signal peptide across membranes. TatA could form the protein-conducting channel of the Tat system. The sequence is that of Sec-independent protein translocase protein TatA from Sinorhizobium medicae (strain WSM419) (Ensifer medicae).